The following is a 496-amino-acid chain: MVSIAGQIGWEAVIGIETHVQLGTASKIFTQASTNFGDDPNTNINPVVCGLPGTLPVLNQKVLEYAVKAAMALNLKVSEHSKFDRKQYFYPDLPKNYQISQYDEPIAEDGWIEVEIAEKEKQTYTKRIGIERLHMEEDAGKLVHIGSDRLTGSNHSLIDYNRAGIALAEIVSKPDLRTGREAAEYASEIRRIMRYLGVSDGNMQEGSLRCDVNISVRKGKNAPFGIKIEIKNMNSFSAIQKACEYEISRQIKAINNGERIIQETRLWDENKQLTTSMRSKEVASDYRYFPDPDLGPIEIELDRREAWKHELPELPAIKRHRYVEELGLSIYDARIITDELPMAEYFESAITAGAEAKALANWLMGDISAYLNTNKTTIGEIKLRPSQLAELIILISNGEISGKIAKEILPELIEKGLSPSALIDDKGLAMISDNNQIRTIIVELLSLYPEEVKAFRNGKIKLQGFFVGQLMKKTSGKADPKISNKILLEILNASEN.

It belongs to the GatB/GatE family. GatB subfamily. Subunit of the heterotrimeric GatCAB amidotransferase (AdT) complex, composed of A, B and C subunits.

The protein resides in the plastid. It is found in the organellar chromatophore. It carries out the reaction L-glutamyl-tRNA(Gln) + L-glutamine + ATP + H2O = L-glutaminyl-tRNA(Gln) + L-glutamate + ADP + phosphate + H(+). Its function is as follows. Allows the formation of correctly charged Gln-tRNA(Gln) through the transamidation of misacylated Glu-tRNA(Gln). The reaction takes place in the presence of glutamine and ATP through an activated gamma-phospho-Glu-tRNA(Gln). The chain is Glutamyl-tRNA(Gln) amidotransferase subunit B, organellar chromatophore from Paulinella chromatophora.